The following is a 316-amino-acid chain: Ribosomal RNA small subunit methyltransferase H (316 aa).

S-adenosyl-L-methionine is bound by residues 35–37, D55, F79, D101, and Q108; that span reads GGH.

It belongs to the methyltransferase superfamily. RsmH family.

It localises to the cytoplasm. It catalyses the reaction cytidine(1402) in 16S rRNA + S-adenosyl-L-methionine = N(4)-methylcytidine(1402) in 16S rRNA + S-adenosyl-L-homocysteine + H(+). Functionally, specifically methylates the N4 position of cytidine in position 1402 (C1402) of 16S rRNA. This is Ribosomal RNA small subunit methyltransferase H from Aliivibrio fischeri (strain MJ11) (Vibrio fischeri).